The primary structure comprises 210 residues: Small ribosomal subunit protein uS4 (210 aa).

In terms of domain architecture, S4 RNA-binding spans 99 to 170 (RRLDNAVFRA…NLEAVVRRGV (72 aa)).

This sequence belongs to the universal ribosomal protein uS4 family. In terms of assembly, part of the 30S ribosomal subunit. Contacts protein S5. The interaction surface between S4 and S5 is involved in control of translational fidelity.

One of the primary rRNA binding proteins, it binds directly to 16S rRNA where it nucleates assembly of the body of the 30S subunit. Functionally, with S5 and S12 plays an important role in translational accuracy. The sequence is that of Small ribosomal subunit protein uS4 from Desulfotalea psychrophila (strain LSv54 / DSM 12343).